A 334-amino-acid chain; its full sequence is GTP 3',8-cyclase (334 aa).

The Radical SAM core domain occupies 11–236 (GFNRKIDYLR…ESTESSQGPA (226 aa)). Residue arginine 20 participates in GTP binding. Residues cysteine 27 and cysteine 31 each contribute to the [4Fe-4S] cluster site. Tyrosine 33 provides a ligand contact to S-adenosyl-L-methionine. Residue cysteine 34 participates in [4Fe-4S] cluster binding. Arginine 69 contributes to the GTP binding site. Glycine 73 lines the S-adenosyl-L-methionine pocket. Threonine 100 contributes to the GTP binding site. Serine 124 is an S-adenosyl-L-methionine binding site. GTP is bound at residue lysine 161. Methionine 195 serves as a coordination point for S-adenosyl-L-methionine. Cysteine 260 and cysteine 263 together coordinate [4Fe-4S] cluster. 265–267 (RVR) contributes to the GTP binding site. Cysteine 277 is a binding site for [4Fe-4S] cluster.

This sequence belongs to the radical SAM superfamily. MoaA family. Monomer and homodimer. Requires [4Fe-4S] cluster as cofactor.

It catalyses the reaction GTP + AH2 + S-adenosyl-L-methionine = (8S)-3',8-cyclo-7,8-dihydroguanosine 5'-triphosphate + 5'-deoxyadenosine + L-methionine + A + H(+). It functions in the pathway cofactor biosynthesis; molybdopterin biosynthesis. Functionally, catalyzes the cyclization of GTP to (8S)-3',8-cyclo-7,8-dihydroguanosine 5'-triphosphate. The polypeptide is GTP 3',8-cyclase (Pseudomonas putida (strain GB-1)).